Consider the following 342-residue polypeptide: Galactose mutarotase (342 aa).

Phosphoserine is present on Ser-14. Beta-D-galactose contacts are provided by residues 81–82 (NR), His-107, 176–178 (HSY), Asp-243, Gln-279, and Glu-307. His-176 (proton donor) is an active-site residue. The Proton acceptor role is filled by Glu-307.

Belongs to the aldose epimerase family. As to quaternary structure, monomer.

Its subcellular location is the cytoplasm. It carries out the reaction alpha-D-galactose = beta-D-galactose. It catalyses the reaction alpha-D-glucose = beta-D-glucose. The protein operates within carbohydrate metabolism; hexose metabolism. It functions in the pathway carbohydrate metabolism; galactose metabolism. In terms of biological role, mutarotase that catalyzes the interconversion of beta-D-galactose and alpha-D-galactose during galactose metabolism. Beta-D-galactose is metabolized in the liver into glucose 1-phosphate, the primary metabolic fuel, by the action of four enzymes that constitute the Leloir pathway: GALM, GALK1 (galactokinase), GALT (galactose-1-phosphate uridylyltransferase) and GALE (UDP-galactose-4'-epimerase). Involved in the maintenance of the equilibrium between the beta- and alpha-anomers of galactose, therefore ensuring a sufficient supply of the alpha-anomer for GALK1. Also active on D-glucose although shows a preference for galactose over glucose. The polypeptide is Galactose mutarotase (Mus musculus (Mouse)).